Here is a 427-residue protein sequence, read N- to C-terminus: Peptidase B (427 aa).

Lys195 and Asp200 together coordinate Mn(2+). Lys207 is an active-site residue. Positions 218, 277, and 279 each coordinate Mn(2+). Residue Arg281 is part of the active site.

This sequence belongs to the peptidase M17 family. Homohexamer. The cofactor is Mn(2+).

The protein localises to the cytoplasm. It carries out the reaction Release of an N-terminal amino acid, Xaa, from a peptide or arylamide. Xaa is preferably Glu or Asp but may be other amino acids, including Leu, Met, His, Cys and Gln.. Its function is as follows. Probably plays an important role in intracellular peptide degradation. In Shigella dysenteriae serotype 1 (strain Sd197), this protein is Peptidase B.